The primary structure comprises 535 residues: uncharacterized protein (535 aa).

The next 6 membrane-spanning stretches (helical) occupy residues 63–83 (LTGIVVALLVVTFAFPVPSIY), 90–110 (VTFGVAPAYATLALAIGTYWI), 143–163 (VAAVHLILWDIGGALLATLYG), 168–188 (VFVTIILFSVTICGVLVATNC), 226–246 (SLGSGVPVTGIATTALYVLLV), and 258–278 (VLILSITTLIFGFLVMWILAW). The HAMP domain occupies 279–330 (LTAAPVRVVRAALKRVEQGDLRGDLVVFDGTELGELQRGFNAMVNGLRERER). A Guanylate cyclase domain is found at 362-486 (AVVFVDIVGS…KPVNQAARLC (125 aa)).

It belongs to the adenylyl cyclase class-3 family.

The protein resides in the cell membrane. This is an uncharacterized protein from Mycobacterium tuberculosis (strain ATCC 25618 / H37Rv).